The following is a 414-amino-acid chain: 2,3-diketo-5-methylthiopentyl-1-phosphate enolase (414 aa).

The active-site Proton acceptor is lysine 99. Residues lysine 148, 174–177 (KDDE), histidine 265, glycine 338, and 360–361 (GG) each bind substrate. 3 residues coordinate Mg(2+): lysine 174, aspartate 176, and glutamate 177. Lysine 174 carries the N6-carboxylysine modification.

Belongs to the RuBisCO large chain family. Type IV subfamily. In terms of assembly, homodimer. Requires Mg(2+) as cofactor.

It carries out the reaction 5-methylsulfanyl-2,3-dioxopentyl phosphate = 2-hydroxy-5-methylsulfanyl-3-oxopent-1-enyl phosphate. Its pathway is amino-acid biosynthesis; L-methionine biosynthesis via salvage pathway; L-methionine from S-methyl-5-thio-alpha-D-ribose 1-phosphate: step 3/6. Functionally, catalyzes the enolization of 2,3-diketo-5-methylthiopentyl-1-phosphate (DK-MTP-1-P) into 2-hydroxy-3-keto-5-methylthiopentenyl-1-phosphate (HK-MTPenyl-1-P). This chain is 2,3-diketo-5-methylthiopentyl-1-phosphate enolase, found in Bacillus cereus (strain B4264).